The primary structure comprises 440 residues: Glutamyl-tRNA reductase (440 aa).

Residues 47–50 (TCNR), Ser110, 115–117 (ERE), and Gln121 contribute to the substrate site. The active-site Nucleophile is Cys48. 192–197 (GTGAYA) provides a ligand contact to NADP(+).

This sequence belongs to the glutamyl-tRNA reductase family. In terms of assembly, homodimer.

It catalyses the reaction (S)-4-amino-5-oxopentanoate + tRNA(Glu) + NADP(+) = L-glutamyl-tRNA(Glu) + NADPH + H(+). Its pathway is porphyrin-containing compound metabolism; protoporphyrin-IX biosynthesis; 5-aminolevulinate from L-glutamyl-tRNA(Glu): step 1/2. Catalyzes the NADPH-dependent reduction of glutamyl-tRNA(Glu) to glutamate 1-semialdehyde (GSA). This chain is Glutamyl-tRNA reductase, found in Paenarthrobacter aurescens (strain TC1).